The primary structure comprises 374 residues: Probable tRNA pseudouridine synthase D (374 aa).

Catalysis depends on D81, which acts as the Nucleophile. Residues 141–340 (VFPNYFDVQR…RKGFQKMYDL (200 aa)) form the TRUD domain.

Belongs to the pseudouridine synthase TruD family.

It carries out the reaction uridine(13) in tRNA = pseudouridine(13) in tRNA. Functionally, could be responsible for synthesis of pseudouridine from uracil-13 in transfer RNAs. This Nanoarchaeum equitans (strain Kin4-M) protein is Probable tRNA pseudouridine synthase D.